The primary structure comprises 228 residues: NAD(P)H-hydrate epimerase (228 aa).

The YjeF N-terminal domain occupies 9 to 215 (AISIDEELFN…RLEEKYSLEL (207 aa)). A (6S)-NADPHX-binding site is contributed by 58-62 (NNGGD). K(+) contacts are provided by Asn59 and Asp123. Residues 127 to 133 (GFSFKPP) and Asp156 each bind (6S)-NADPHX. Ser159 contacts K(+).

This sequence belongs to the NnrE/AIBP family. K(+) serves as cofactor.

It catalyses the reaction (6R)-NADHX = (6S)-NADHX. The enzyme catalyses (6R)-NADPHX = (6S)-NADPHX. Functionally, catalyzes the epimerization of the S- and R-forms of NAD(P)HX, a damaged form of NAD(P)H that is a result of enzymatic or heat-dependent hydration. This is a prerequisite for the S-specific NAD(P)H-hydrate dehydratase to allow the repair of both epimers of NAD(P)HX. This is NAD(P)H-hydrate epimerase from Anopheles darlingi (Mosquito).